Consider the following 58-residue polypeptide: Ribosome modulation factor (58 aa).

A disordered region spans residues 1 to 28 (MKRQKRDRFERAHTQGFKAGLHGRSKDN).

Belongs to the ribosome modulation factor family.

The protein localises to the cytoplasm. Its function is as follows. During stationary phase, converts 70S ribosomes to an inactive dimeric form (100S ribosomes). This is Ribosome modulation factor from Idiomarina loihiensis (strain ATCC BAA-735 / DSM 15497 / L2-TR).